The chain runs to 317 residues: MNDNDSPRALFVFAHPDDETILSGGTMARLAAEGAHVSLLTCTLGEEGEVIAPELRELAADRADQLGGWRIAELRSALDRLGSPRGARISQHWLAGPGRWRDSGMAAGRNTHPRAFIGGDFGEQARAAAKTIREVRPHVVVTHDPEGGYGHRDHIYANRLVVEAVKIAAAETHSEFGAPWQVKKLYWTGIGESAWRRAIKELGRRAIPDGFELVHADVAKPRRDEEITTVVDIGDYRAAKLAALAAHATQITVCHELAAFALSNKALTPVPAEEHFLLVPLRFGAVDNQDLDNRNPNSQPPADQAREDHLLTGLGFA.

3 residues coordinate Zn(2+): H15, D18, and H154. Residues 289–317 (QDLDNRNPNSQPPADQAREDHLLTGLGFA) are disordered.

The protein belongs to the MshB deacetylase family. Zn(2+) is required as a cofactor.

The enzyme catalyses 1D-myo-inositol 2-acetamido-2-deoxy-alpha-D-glucopyranoside + H2O = 1D-myo-inositol 2-amino-2-deoxy-alpha-D-glucopyranoside + acetate. Catalyzes the deacetylation of 1D-myo-inositol 2-acetamido-2-deoxy-alpha-D-glucopyranoside (GlcNAc-Ins) in the mycothiol biosynthesis pathway. The polypeptide is 1D-myo-inositol 2-acetamido-2-deoxy-alpha-D-glucopyranoside deacetylase (Segniliparus rotundus (strain ATCC BAA-972 / CDC 1076 / CIP 108378 / DSM 44985 / JCM 13578)).